The sequence spans 178 residues: Gamma-crystallin S (178 aa).

S2 bears the N-acetylserine mark. Positions 2 to 5 (SKTG) are N-terminal arm. Beta/gamma crystallin 'Greek key' domains lie at 6–44 (AKISFYEDRNFQGRRYDCDCDCVDFRSYLSRCNSIRVEG) and 45–87 (GTWA…RAVH). Residues 88–93 (LSSGGQ) are connecting peptide. Beta/gamma crystallin 'Greek key' domains follow at residues 94–134 (YKIQ…KVLE) and 135–177 (GTWI…RRIV).

It belongs to the beta/gamma-crystallin family. As to quaternary structure, monomer.

Functionally, crystallins are the dominant structural components of the vertebrate eye lens. In Rattus norvegicus (Rat), this protein is Gamma-crystallin S (Crygs).